The chain runs to 131 residues: Fluoride-specific ion channel FluC (131 aa).

Helical transmembrane passes span 4–24, 30–50, 68–88, and 104–124; these read LWIMIGSALGGAARFWVTGFV, GIFPWGTVLINVSGSFLIGFF, LFVMIGLCGGFTTFSSFSLQT, and IALSVVFCLLAVWLGHVVAVA. Na(+)-binding residues include Gly-76 and Thr-79.

Belongs to the fluoride channel Fluc/FEX (TC 1.A.43) family.

It localises to the cell inner membrane. The catalysed reaction is fluoride(in) = fluoride(out). Its activity is regulated as follows. Na(+) is not transported, but it plays an essential structural role and its presence is essential for fluoride channel function. In terms of biological role, fluoride-specific ion channel. Important for reducing fluoride concentration in the cell, thus reducing its toxicity. In Methylocella silvestris (strain DSM 15510 / CIP 108128 / LMG 27833 / NCIMB 13906 / BL2), this protein is Fluoride-specific ion channel FluC.